A 318-amino-acid chain; its full sequence is Magnetosome protein MamM (318 aa).

The tract at residues 1–210 (MRKSGCAVCS…FMDAYRGLMD (210 aa)) is transmembrane domain (TMD). 4 consecutive transmembrane segments (helical) span residues 13–33 (IGWV…FVGL), 39–59 (AMLA…MVII), 81–101 (FILS…LLVH), and 117–137 (LIVL…YFYS). Residues 211–318 (HTAGEAVQNR…DEVMLSKVDN (108 aa)) form a C-terminal domain (CTD) region. Fe cation contacts are provided by aspartate 249, histidine 264, histidine 285, and glutamate 289.

This sequence belongs to the cation diffusion facilitator (CDF) transporter (TC 2.A.4) family. As to quaternary structure, forms homodimers via its C-terminal domain (CTD) in the presence of metal cations. Interacts with MamB via their CTD. Isolated CTD forms homodimers.

Its subcellular location is the magnetosome membrane. The protein resides in the cell inner membrane. Its function is as follows. Essential for magnetosome formation; required for stable accumulation of MamB. May nucleate iron crystal formation. Probably binds and transports iron. Binds divalent cations, possibly up to 3 Zn(2+) per dimer in vitro, probably iron in vivo. One of 7 genes (mamLQBIEMO) able to induce magnetosome membrane biogenesis; coexpression of mamLQRBIEMO in a deletion of the 17 gene mamAB operon restores magnetosome vesicle formation but not magnetite biosynthesis. This Magnetospirillum gryphiswaldense (strain DSM 6361 / JCM 21280 / NBRC 15271 / MSR-1) protein is Magnetosome protein MamM.